The sequence spans 164 residues: Large ribosomal subunit protein uL11 (164 aa).

Belongs to the universal ribosomal protein uL11 family. In terms of assembly, part of the ribosomal stalk of the 50S ribosomal subunit. Interacts with L10 and the large rRNA to form the base of the stalk. L10 forms an elongated spine to which L12 dimers bind in a sequential fashion forming a multimeric L10(L12)X complex.

In terms of biological role, forms part of the ribosomal stalk which helps the ribosome interact with GTP-bound translation factors. This chain is Large ribosomal subunit protein uL11, found in Pyrococcus furiosus (strain ATCC 43587 / DSM 3638 / JCM 8422 / Vc1).